Here is a 172-residue protein sequence, read N- to C-terminus: Crossover junction endodeoxyribonuclease RuvC (172 aa).

Active-site residues include Asp-11, Glu-70, and Asp-142. 3 residues coordinate Mg(2+): Asp-11, Glu-70, and Asp-142.

The protein belongs to the RuvC family. In terms of assembly, homodimer which binds Holliday junction (HJ) DNA. The HJ becomes 2-fold symmetrical on binding to RuvC with unstacked arms; it has a different conformation from HJ DNA in complex with RuvA. In the full resolvosome a probable DNA-RuvA(4)-RuvB(12)-RuvC(2) complex forms which resolves the HJ. Mg(2+) is required as a cofactor.

The protein localises to the cytoplasm. It catalyses the reaction Endonucleolytic cleavage at a junction such as a reciprocal single-stranded crossover between two homologous DNA duplexes (Holliday junction).. The RuvA-RuvB-RuvC complex processes Holliday junction (HJ) DNA during genetic recombination and DNA repair. Endonuclease that resolves HJ intermediates. Cleaves cruciform DNA by making single-stranded nicks across the HJ at symmetrical positions within the homologous arms, yielding a 5'-phosphate and a 3'-hydroxyl group; requires a central core of homology in the junction. The consensus cleavage sequence is 5'-(A/T)TT(C/G)-3'. Cleavage occurs on the 3'-side of the TT dinucleotide at the point of strand exchange. HJ branch migration catalyzed by RuvA-RuvB allows RuvC to scan DNA until it finds its consensus sequence, where it cleaves and resolves the cruciform DNA. The chain is Crossover junction endodeoxyribonuclease RuvC from Hydrogenovibrio crunogenus (strain DSM 25203 / XCL-2) (Thiomicrospira crunogena).